A 733-amino-acid chain; its full sequence is Ferric aerobactin receptor (733 aa).

The N-terminal stretch at 1-25 (MMISKKYTLWALNPLLLTMMAPAVA) is a signal peptide. Positions 31 to 38 (ETFVVSAN) match the TonB box motif. One can recognise a TBDR plug domain in the interval 43–153 (TVAEMAQTTW…TGGLINIVTK (111 aa)). Residues 158–733 (ETIMEFEAGT…TFGLNYSVLF (576 aa)) form the TBDR beta-barrel domain. The short motif at 716–733 (YDYKGRGRTFGLNYSVLF) is the TonB C-terminal box element.

Belongs to the TonB-dependent receptor family.

The protein localises to the cell outer membrane. Its function is as follows. Receptor for aerobactin. The sequence is that of Ferric aerobactin receptor (iutA) from Klebsiella pneumoniae.